Here is a 556-residue protein sequence, read N- to C-terminus: Membrane protein insertase YidC (556 aa).

The next 5 helical transmembrane spans lie at 6–26, 332–352, 358–378, 428–448, and 501–521; these read IVLY…WQID, LDLT…FSLM, VVGN…LAFY, LGGC…YWVL, and VMMF…SGLV.

This sequence belongs to the OXA1/ALB3/YidC family. Type 1 subfamily. In terms of assembly, interacts with the Sec translocase complex via SecD. Specifically interacts with transmembrane segments of nascent integral membrane proteins during membrane integration.

It is found in the cell inner membrane. Required for the insertion and/or proper folding and/or complex formation of integral membrane proteins into the membrane. Involved in integration of membrane proteins that insert both dependently and independently of the Sec translocase complex, as well as at least some lipoproteins. Aids folding of multispanning membrane proteins. This is Membrane protein insertase YidC from Legionella pneumophila (strain Paris).